The primary structure comprises 356 residues: sn-glycerol-3-phosphate import ATP-binding protein UgpC (356 aa).

The 232-residue stretch at 4 to 235 folds into the ABC transporter domain; that stretch reads LKLQAVTKSW…PASRFVASFI (232 aa). An ATP-binding site is contributed by 37–44; sequence GPSGCGKS.

This sequence belongs to the ABC transporter superfamily. sn-glycerol-3-phosphate importer (TC 3.A.1.1.3) family. As to quaternary structure, the complex is composed of two ATP-binding proteins (UgpC), two transmembrane proteins (UgpA and UgpE) and a solute-binding protein (UgpB).

The protein resides in the cell inner membrane. The enzyme catalyses sn-glycerol 3-phosphate(out) + ATP + H2O = sn-glycerol 3-phosphate(in) + ADP + phosphate + H(+). Part of the ABC transporter complex UgpBAEC involved in sn-glycerol-3-phosphate (G3P) import. Responsible for energy coupling to the transport system. This Salmonella paratyphi A (strain ATCC 9150 / SARB42) protein is sn-glycerol-3-phosphate import ATP-binding protein UgpC.